Reading from the N-terminus, the 263-residue chain is Putative TATA-binding protein pB263R (263 aa).

It belongs to the asfivirus B263R family.

Its function is as follows. Putative TATA-binding protein. This is Putative TATA-binding protein pB263R from African swine fever virus (isolate Warthog/Namibia/Wart80/1980) (ASFV).